Consider the following 190-residue polypeptide: Surfactant protein C (190 aa).

The propeptide occupies 1–23 (MDVGSKEVLIENPPDYSAAPQGR). Cys28 carries the S-palmitoyl cysteine lipid modification. Residues 59–190 (HMSQKHTEMV…LCGEVPLYYI (132 aa)) constitute a propeptide that is removed on maturation. The 97-residue stretch at 94-190 (FSIGSTGIVV…LCGEVPLYYI (97 aa)) folds into the BRICHOS domain. Cys121 and Cys182 are disulfide-bonded.

The protein localises to the secreted. Its subcellular location is the extracellular space. It localises to the surface film. Functionally, pulmonary surfactant associated proteins promote alveolar stability by lowering the surface tension at the air-liquid interface in the peripheral air spaces. This is Surfactant protein C (SFTPC) from Neovison vison (American mink).